Reading from the N-terminus, the 311-residue chain is Porphobilinogen deaminase (311 aa).

C243 carries the S-(dipyrrolylmethanemethyl)cysteine modification.

Belongs to the HMBS family. As to quaternary structure, monomer. Dipyrromethane serves as cofactor.

It catalyses the reaction 4 porphobilinogen + H2O = hydroxymethylbilane + 4 NH4(+). Its pathway is porphyrin-containing compound metabolism; protoporphyrin-IX biosynthesis; coproporphyrinogen-III from 5-aminolevulinate: step 2/4. Tetrapolymerization of the monopyrrole PBG into the hydroxymethylbilane pre-uroporphyrinogen in several discrete steps. This Aliivibrio salmonicida (strain LFI1238) (Vibrio salmonicida (strain LFI1238)) protein is Porphobilinogen deaminase.